A 446-amino-acid chain; its full sequence is Glutamine synthetase (446 aa).

A GS beta-grasp domain is found at 18 to 103 (ENVRYLRLQF…LICDVYKTDG (86 aa)). Residues 110-446 (PRANLKRVLK…WERDQYMKQY (337 aa)) form the GS catalytic domain. Mg(2+)-binding residues include glutamate 134 and glutamate 136. Glutamate 186 serves as a coordination point for ATP. Mg(2+)-binding residues include glutamate 191 and glutamate 198. Residues 242-243 (NG) and glycine 243 each bind L-glutamate. Histidine 247 serves as a coordination point for Mg(2+). Residue serine 251 coordinates ATP. L-glutamate-binding residues include arginine 300, glutamate 306, and arginine 318. Positions 318 and 323 each coordinate ATP. Position 335 (glutamate 335) interacts with Mg(2+). Arginine 337 serves as a coordination point for L-glutamate.

This sequence belongs to the glutamine synthetase family. In terms of assembly, oligomer of 12 subunits arranged in the form of two hexagons. In its feedback-inhibited form, interacts with TnrA in order to block its DNA-binding activity. The cofactor is Mg(2+).

Its subcellular location is the cytoplasm. The enzyme catalyses L-glutamate + NH4(+) + ATP = L-glutamine + ADP + phosphate + H(+). Its activity is regulated as follows. Inhibited by glutamine. Its function is as follows. Glutamine synthetase (GS) is an unusual multitasking protein that functions as an enzyme, a transcription coregulator, and a chaperone in ammonium assimilation and in the regulation of genes involved in nitrogen metabolism. It catalyzes the ATP-dependent biosynthesis of glutamine from glutamate and ammonia. Feedback-inhibited GlnA also interacts with and regulates the activity of the transcriptional regulator TnrA. During nitrogen limitation, TnrA is in its DNA-binding active state and turns on the transcription of genes required for nitrogen assimilation. Under conditions of nitrogen excess, feedback-inhibited GlnA forms a stable complex with TnrA, which inhibits its DNA-binding activity. In contrast, feedback-inhibited GlnA acts as a chaperone to stabilize the DNA-binding activity of GlnR, which represses the transcription of nitrogen assimilation genes. The chain is Glutamine synthetase from Staphylococcus aureus (strain MSSA476).